We begin with the raw amino-acid sequence, 788 residues long: Cadherin-10 (788 aa).

The N-terminal stretch at 1–22 (MTIHQFLLLFLFWVCLPHFCSP) is a signal peptide. A propeptide spanning residues 23 to 54 (EIMFRRTPVPQQRILSSRVPRSDGKILHRQKR) is cleaved from the precursor. 5 consecutive Cadherin domains span residues 55 to 160 (GWMW…EPTF), 161 to 269 (PEEI…PPRF), 270 to 384 (PQNT…PPVF), 385 to 487 (SRSS…DNAP), and 488 to 606 (QFAV…LLLP). The Extracellular segment spans residues 55 to 613 (GWMWNQFFLL…LLPAGLSTGA (559 aa)). Residue asparagine 256 is glycosylated (N-linked (GlcNAc...) asparagine). N-linked (GlcNAc...) asparagine glycans are attached at residues asparagine 438, asparagine 456, and asparagine 534. Residues 614 to 634 (LIAILLCIIILLVIVVLFAAL) traverse the membrane as a helical segment. Over 635–788 (KRQRKKEPLI…YGGGESDKDS (154 aa)) the chain is Cytoplasmic. Serine 784 and serine 788 each carry phosphoserine.

As to expression, predominantly expressed in brain. Also found in adult and fetal kidney. Very low levels detected in prostate and fetal lung.

The protein localises to the cell membrane. Cadherins are calcium-dependent cell adhesion proteins. They preferentially interact with themselves in a homophilic manner in connecting cells; cadherins may thus contribute to the sorting of heterogeneous cell types. This Homo sapiens (Human) protein is Cadherin-10 (CDH10).